A 279-amino-acid polypeptide reads, in one-letter code: S-methyl-5'-thioadenosine phosphorylase (279 aa).

Phosphate is bound by residues Ser13, 55–56, and 88–89; these read RH and TA. Residue Met191 participates in substrate binding. Thr192 contacts phosphate. Residue 215–217 participates in substrate binding; sequence DYD.

This sequence belongs to the PNP/MTAP phosphorylase family. MTAP subfamily. In terms of assembly, homotrimer.

The protein localises to the cytoplasm. It localises to the nucleus. It catalyses the reaction S-methyl-5'-thioadenosine + phosphate = 5-(methylsulfanyl)-alpha-D-ribose 1-phosphate + adenine. It functions in the pathway amino-acid biosynthesis; L-methionine biosynthesis via salvage pathway; S-methyl-5-thio-alpha-D-ribose 1-phosphate from S-methyl-5'-thioadenosine (phosphorylase route): step 1/1. Catalyzes the reversible phosphorylation of S-methyl-5'-thioadenosine (MTA) to adenine and 5-methylthioribose-1-phosphate. Involved in the breakdown of MTA, a major by-product of polyamine biosynthesis. Responsible for the first step in the methionine salvage pathway after MTA has been generated from S-adenosylmethionine. Has broad substrate specificity with 6-aminopurine nucleosides as preferred substrates. This chain is S-methyl-5'-thioadenosine phosphorylase, found in Anopheles darlingi (Mosquito).